A 773-amino-acid polypeptide reads, in one-letter code: ATP-dependent permease MDL2, mitochondrial (773 aa).

The N-terminal 90 residues, 1–90 (MLNGRLPLLR…SPISKGSARS (90 aa)), are a transit peptide targeting the mitochondrion. The span at 73 to 84 (PETSLPSASPIS) shows a compositional bias: polar residues. The interval 73–95 (PETSLPSASPISKGSARSAHAKE) is disordered. Residues 119–413 (LLTAILLLTI…LSTFYSEIMQ (295 aa)) form the ABC transmembrane type-1 domain. The next 3 helical transmembrane spans lie at 123-143 (ILLLTISCSIGMSIPKVIGIV), 170-192 (FLSFFTVALLIGCAANFGRFILL), and 257-277 (VVGVGMMCSLSPQLSILLLFF). 481 to 488 (GPSGRGKS) contacts ATP. The 241-residue stretch at 493–733 (LLLRYYNPTT…DDNDNNHDND (241 aa)) folds into the ABC transporter domain. Composition is skewed to basic and acidic residues over residues 706–733 (KEDLNESKEHDDQKKDDNDDNDNNHDND) and 740–762 (ETKDNNSDDIEKSVEHLLKDAAK). The tract at residues 706 to 773 (KEDLNESKEH…ANPIKITPQP (68 aa)) is disordered.

This sequence belongs to the ABC transporter superfamily. ABCB family. Mitochondrial peptide exporter (TC 3.A.1.212) subfamily.

It is found in the mitochondrion inner membrane. The chain is ATP-dependent permease MDL2, mitochondrial (MDL2) from Saccharomyces cerevisiae (strain ATCC 204508 / S288c) (Baker's yeast).